The chain runs to 527 residues: Peptide chain release factor 3 (527 aa).

Residues 9 to 277 enclose the tr-type G domain; sequence AKRRTFAIIS…AVVDWAPRPL (269 aa). GTP contacts are provided by residues 18–25, 86–90, and 140–143; these read SHPDAGKT, DTPGH, and NKLD.

This sequence belongs to the TRAFAC class translation factor GTPase superfamily. Classic translation factor GTPase family. PrfC subfamily.

It localises to the cytoplasm. Functionally, increases the formation of ribosomal termination complexes and stimulates activities of RF-1 and RF-2. It binds guanine nucleotides and has strong preference for UGA stop codons. It may interact directly with the ribosome. The stimulation of RF-1 and RF-2 is significantly reduced by GTP and GDP, but not by GMP. This chain is Peptide chain release factor 3, found in Ectopseudomonas mendocina (strain ymp) (Pseudomonas mendocina).